Reading from the N-terminus, the 372-residue chain is Fork head domain-containing protein FD4 (372 aa).

The segment at residues 12 to 103 (QKPPYSYISL…FDMFENGSLL (92 aa)) is a DNA-binding region (fork-head). Disordered regions lie at residues 225–245 (ESLI…DEDD) and 261–281 (PTTP…RTED).

In terms of tissue distribution, expressed in early embryogenesis in 14 symmetrical pairs of segmentally arranged neuroblasts. Also, later in embryogenesis, in a cluster of cells in head region.

The protein resides in the nucleus. Involved in development during embryogenesis. In Drosophila melanogaster (Fruit fly), this protein is Fork head domain-containing protein FD4 (fd96Ca).